The following is a 380-amino-acid chain: uncharacterized protein (380 aa).

Residues 256 to 301 are a coiled coil; the sequence is DKEEKIQKSYQYQTELITELQGRIAELEKENQSLKENVKEPETSKP.

This is an uncharacterized protein from Pasteurella multocida (strain Pm70).